Consider the following 457-residue polypeptide: Zinc finger protein ZPR1 (457 aa).

The span at 1 to 13 (MSTVSDPNSSNPP) shows a compositional bias: polar residues. Residues 1 to 21 (MSTVSDPNSSNPPESAGNIRP) form a disordered region. 2 C4-type zinc fingers span residues 43 to 75 (CMNCFETGVTRLLPTKIPFFREVVLMSFKCDHC) and 261 to 293 (CPSCQAPCETNMKLTNIPHFKEVVIMATVCGAC). A disordered region spans residues 414–457 (VQSLSDDDSEPDDKLTVERYDRSYEDNEDLGLNDMKTEGYEEKA). Basic and acidic residues-rich tracts occupy residues 425 to 438 (DDKLTVERYDRSYE) and 448 to 457 (MKTEGYEEKA).

The protein belongs to the ZPR1 family.

In terms of biological role, might mediate EGFR and FGFR signal transduction cascades required for lumen formation in tracheal cells. This is Zinc finger protein ZPR1 from Drosophila melanogaster (Fruit fly).